The sequence spans 133 residues: Ribosome-binding factor A (133 aa).

The protein belongs to the RbfA family. As to quaternary structure, monomer. Binds 30S ribosomal subunits, but not 50S ribosomal subunits or 70S ribosomes.

It is found in the cytoplasm. One of several proteins that assist in the late maturation steps of the functional core of the 30S ribosomal subunit. Associates with free 30S ribosomal subunits (but not with 30S subunits that are part of 70S ribosomes or polysomes). Required for efficient processing of 16S rRNA. May interact with the 5'-terminal helix region of 16S rRNA. The chain is Ribosome-binding factor A from Synechocystis sp. (strain ATCC 27184 / PCC 6803 / Kazusa).